We begin with the raw amino-acid sequence, 97 residues long: MSHLRIAVTFLCTLFALTAGAGESCQVGGSAIPVGKTKQELCNLYECATDSNRVVLKKLTCAEQAVKTGCRSVPGDANAPFPDCCPTTLCRGRQWDH.

An N-terminal signal peptide occupies residues 1-20 (MSHLRIAVTFLCTLFALTAG).

The protein belongs to the scorpion La1-like peptide family. In terms of processing, contains 4 disulfide bonds. In terms of tissue distribution, expressed by the venom gland.

The protein resides in the secreted. The polypeptide is Venom peptide HsVx1 (Heterometrus spinifer (Asia giant forest scorpion)).